The following is a 348-amino-acid chain: Centromere protein N-A (348 aa).

Belongs to the CENP-N/CHL4 family.

The protein localises to the nucleus. The protein resides in the chromosome. Its subcellular location is the centromere. Its function is as follows. Probable component of a centromeric complex involved in assembly of kinetochore proteins, mitotic progression and chromosome segregation. The chain is Centromere protein N-A (cenpn-a) from Xenopus laevis (African clawed frog).